The primary structure comprises 338 residues: Ferredoxin--NADP reductase (338 aa).

Residues aspartate 36, glutamine 44, tyrosine 49, valine 89, phenylalanine 123, aspartate 290, and threonine 331 each coordinate FAD.

This sequence belongs to the ferredoxin--NADP reductase type 2 family. Homodimer. The cofactor is FAD.

The enzyme catalyses 2 reduced [2Fe-2S]-[ferredoxin] + NADP(+) + H(+) = 2 oxidized [2Fe-2S]-[ferredoxin] + NADPH. This is Ferredoxin--NADP reductase from Anaplasma phagocytophilum (strain HZ).